Here is a 120-residue protein sequence, read N- to C-terminus: Large ribosomal subunit protein bL19c (120 aa).

This sequence belongs to the bacterial ribosomal protein bL19 family.

It localises to the plastid. Its subcellular location is the chloroplast. This Thalassiosira pseudonana (Marine diatom) protein is Large ribosomal subunit protein bL19c.